The primary structure comprises 106 residues: ATP-dependent Clp protease adapter protein ClpS (106 aa).

It belongs to the ClpS family. Binds to the N-terminal domain of the chaperone ClpA.

Involved in the modulation of the specificity of the ClpAP-mediated ATP-dependent protein degradation. The chain is ATP-dependent Clp protease adapter protein ClpS from Yersinia enterocolitica serotype O:8 / biotype 1B (strain NCTC 13174 / 8081).